The following is a 168-amino-acid chain: Large ribosomal subunit protein uL10 (168 aa).

The protein belongs to the universal ribosomal protein uL10 family. As to quaternary structure, part of the ribosomal stalk of the 50S ribosomal subunit. The N-terminus interacts with L11 and the large rRNA to form the base of the stalk. The C-terminus forms an elongated spine to which L12 dimers bind in a sequential fashion forming a multimeric L10(L12)X complex.

Forms part of the ribosomal stalk, playing a central role in the interaction of the ribosome with GTP-bound translation factors. The polypeptide is Large ribosomal subunit protein uL10 (Acinetobacter baumannii (strain AB307-0294)).